A 76-amino-acid polypeptide reads, in one-letter code: MAYRESFYRYLMTQRDADSSDEIAQFANNAQHDLTFPKQEQDYEKLSDYLELNASYLPSMYIFDRAYRMYEDKMMY.

The protein belongs to the UPF0346 family.

In Lactobacillus helveticus (strain DPC 4571), this protein is UPF0346 protein lhv_1069.